A 177-amino-acid polypeptide reads, in one-letter code: ATP synthase subunit delta (177 aa).

This sequence belongs to the ATPase delta chain family. As to quaternary structure, F-type ATPases have 2 components, F(1) - the catalytic core - and F(0) - the membrane proton channel. F(1) has five subunits: alpha(3), beta(3), gamma(1), delta(1), epsilon(1). F(0) has three main subunits: a(1), b(2) and c(10-14). The alpha and beta chains form an alternating ring which encloses part of the gamma chain. F(1) is attached to F(0) by a central stalk formed by the gamma and epsilon chains, while a peripheral stalk is formed by the delta and b chains.

The protein localises to the cell inner membrane. In terms of biological role, f(1)F(0) ATP synthase produces ATP from ADP in the presence of a proton or sodium gradient. F-type ATPases consist of two structural domains, F(1) containing the extramembraneous catalytic core and F(0) containing the membrane proton channel, linked together by a central stalk and a peripheral stalk. During catalysis, ATP synthesis in the catalytic domain of F(1) is coupled via a rotary mechanism of the central stalk subunits to proton translocation. Its function is as follows. This protein is part of the stalk that links CF(0) to CF(1). It either transmits conformational changes from CF(0) to CF(1) or is implicated in proton conduction. This chain is ATP synthase subunit delta, found in Photorhabdus laumondii subsp. laumondii (strain DSM 15139 / CIP 105565 / TT01) (Photorhabdus luminescens subsp. laumondii).